The sequence spans 366 residues: Anhydro-N-acetylmuramic acid kinase (366 aa).

Residue 10–17 (GTSLDGVD) participates in ATP binding.

This sequence belongs to the anhydro-N-acetylmuramic acid kinase family.

The catalysed reaction is 1,6-anhydro-N-acetyl-beta-muramate + ATP + H2O = N-acetyl-D-muramate 6-phosphate + ADP + H(+). The protein operates within amino-sugar metabolism; 1,6-anhydro-N-acetylmuramate degradation. It functions in the pathway cell wall biogenesis; peptidoglycan recycling. In terms of biological role, catalyzes the specific phosphorylation of 1,6-anhydro-N-acetylmuramic acid (anhMurNAc) with the simultaneous cleavage of the 1,6-anhydro ring, generating MurNAc-6-P. Is required for the utilization of anhMurNAc either imported from the medium or derived from its own cell wall murein, and thus plays a role in cell wall recycling. In Nitrobacter winogradskyi (strain ATCC 25391 / DSM 10237 / CIP 104748 / NCIMB 11846 / Nb-255), this protein is Anhydro-N-acetylmuramic acid kinase.